Reading from the N-terminus, the 458-residue chain is 5-hydroxytryptamine receptor 2C (458 aa).

Positions 1-32 (MVNLRNAVHSFLVHLIGLLVWQSDISVSPVAA) are cleaved as a signal peptide. Residues 33–55 (IVTDIFNTSDGGRFKFPDGVQNW) are Extracellular-facing. Asparagine 39 carries an N-linked (GlcNAc...) asparagine glycan. Residues 56–80 (PALSIVIIIIMTIGGNILVIMAVSM) traverse the membrane as a helical segment. Topologically, residues 81 to 86 (EKKLHN) are cytoplasmic. The chain crosses the membrane as a helical span at residues 87–111 (ATNYFLMSLAIADMLVGLLVMPLSL). Topologically, residues 112-128 (LAILYDYVWPLPRYLCP) are extracellular. A disulfide bridge connects residues cysteine 127 and cysteine 207. Residues 129 to 151 (VWISLDVLFSTASIMHLCAISLD) form a helical membrane-spanning segment. Residue threonine 139 coordinates ergotamine. The DRY motif; important for ligand-induced conformation changes motif lies at 151–153 (DRY). Topologically, residues 152 to 167 (RYVAIRNPIEHSRFNS) are cytoplasmic. Residues 168–189 (RTKAIMKIAIVWAISIGVSVPI) traverse the membrane as a helical segment. Topologically, residues 190-213 (PVIGLRDEEKVFVNNTTCVLNDPN) are extracellular. An N-linked (GlcNAc...) asparagine glycan is attached at asparagine 204. Leucine 209 lines the ergotamine pocket. A helical membrane pass occupies residues 214–236 (FVLIGSFVAFFIPLTIMVITYCL). Topologically, residues 237–311 (TIYVLRRQAL…AINNERKASK (75 aa)) are cytoplasmic. Positions 274–301 (EENSANPNQDQNARRRKKKERRPRGTMQ) are disordered. Over residues 287–297 (RRRKKKERRPR) the composition is skewed to basic residues. The helical transmembrane segment at 312–336 (VLGIVFFVFLIMWCPFFITNILSVL) threads the bilayer. A disulfide bridge connects residues cysteine 337 and cysteine 341. Residues 337 to 347 (CEKSCNQKLME) are Extracellular-facing. A helical transmembrane segment spans residues 348-370 (KLLNVFVWIGYVCSGINPLVYTL). Residues 364 to 368 (NPLVY) carry the NPxxY motif; important for ligand-induced conformation changes and signaling motif. Residues 371 to 458 (FNKIYRRAFS…SVVSERISSV (88 aa)) are Cytoplasmic-facing. Positions 456–458 (SSV) match the PDZ-binding motif.

This sequence belongs to the G-protein coupled receptor 1 family. In terms of assembly, interacts with MPDZ. Interacts with ARRB2. Interacts with MPP3; this interaction stabilizes the receptor at the plasma membrane and prevents the desensitization of the HTR2C receptor-mediated calcium response. Post-translationally, N-glycosylated. In terms of tissue distribution, detected in brain.

It localises to the cell membrane. Its activity is regulated as follows. Inhibited by inverse agonist ritanserin. Functionally, G-protein coupled receptor for 5-hydroxytryptamine (serotonin). Also functions as a receptor for various drugs and psychoactive substances, including ergot alkaloid derivatives, 1-2,5,-dimethoxy-4-iodophenyl-2-aminopropane (DOI) and lysergic acid diethylamide (LSD). Ligand binding causes a conformation change that triggers signaling via guanine nucleotide-binding proteins (G proteins) and modulates the activity of downstream effectors. HTR2C is coupled to G(q)/G(11) G alpha proteins and activates phospholipase C-beta, releasing diacylglycerol (DAG) and inositol 1,4,5-trisphosphate (IP3) second messengers that modulate the activity of phosphatidylinositol 3-kinase and promote the release of Ca(2+) ions from intracellular stores, respectively. Beta-arrestin family members inhibit signaling via G proteins and mediate activation of alternative signaling pathways. Regulates neuronal activity via the activation of short transient receptor potential calcium channels in the brain, and thereby modulates the activation of pro-opiomelanocortin neurons and the release of CRH that then regulates the release of corticosterone. Plays a role in the regulation of appetite and eating behavior, responses to anxiogenic stimuli and stress. Plays a role in insulin sensitivity and glucose homeostasis. The chain is 5-hydroxytryptamine receptor 2C from Homo sapiens (Human).